We begin with the raw amino-acid sequence, 512 residues long: Intermediate filament family orphan 2 (512 aa).

In terms of domain architecture, IF rod spans Asn50–Asn479. Residues Lys473 to Ser512 form a disordered region. The span at Ser480–Gly492 shows a compositional bias: low complexity. Residues Glu496 to Ser512 show a composition bias toward acidic residues.

Belongs to the intermediate filament family.

This chain is Intermediate filament family orphan 2 (Iffo2), found in Mus musculus (Mouse).